A 230-amino-acid chain; its full sequence is Phosphatidylserine decarboxylase proenzyme (230 aa).

The active-site Schiff-base intermediate with substrate; via pyruvic acid is Ser-186. Residue Ser-186 is modified to Pyruvic acid (Ser); by autocatalysis.

The protein belongs to the phosphatidylserine decarboxylase family. PSD-A subfamily. In terms of assembly, heterodimer of a large membrane-associated beta subunit and a small pyruvoyl-containing alpha subunit. Pyruvate serves as cofactor. Is synthesized initially as an inactive proenzyme. Formation of the active enzyme involves a self-maturation process in which the active site pyruvoyl group is generated from an internal serine residue via an autocatalytic post-translational modification. Two non-identical subunits are generated from the proenzyme in this reaction, and the pyruvate is formed at the N-terminus of the alpha chain, which is derived from the carboxyl end of the proenzyme. The post-translation cleavage follows an unusual pathway, termed non-hydrolytic serinolysis, in which the side chain hydroxyl group of the serine supplies its oxygen atom to form the C-terminus of the beta chain, while the remainder of the serine residue undergoes an oxidative deamination to produce ammonia and the pyruvoyl prosthetic group on the alpha chain.

It localises to the cell membrane. It carries out the reaction a 1,2-diacyl-sn-glycero-3-phospho-L-serine + H(+) = a 1,2-diacyl-sn-glycero-3-phosphoethanolamine + CO2. It functions in the pathway phospholipid metabolism; phosphatidylethanolamine biosynthesis; phosphatidylethanolamine from CDP-diacylglycerol: step 2/2. In terms of biological role, catalyzes the formation of phosphatidylethanolamine (PtdEtn) from phosphatidylserine (PtdSer). The polypeptide is Phosphatidylserine decarboxylase proenzyme (Wolbachia pipientis wMel).